The sequence spans 122 residues: Acidic phospholipase A2 (122 aa).

Cystine bridges form between Cys26-Cys115, Cys28-Cys44, Cys43-Cys95, Cys49-Cys122, Cys50-Cys88, Cys57-Cys81, and Cys75-Cys86. Ca(2+) contacts are provided by Tyr27, Gly29, and Gly31. The active site involves His47. Ca(2+) is bound at residue Asp48. The active site involves Asp89.

This sequence belongs to the phospholipase A2 family. Group II subfamily. D49 sub-subfamily. It depends on Ca(2+) as a cofactor. Post-translationally, contains 7 disulfide bonds. In terms of tissue distribution, expressed by the venom gland.

Its subcellular location is the secreted. It carries out the reaction a 1,2-diacyl-sn-glycero-3-phosphocholine + H2O = a 1-acyl-sn-glycero-3-phosphocholine + a fatty acid + H(+). Snake venom phospholipase A2 (PLA2) that displays low systemic toxicity and causes severe symptoms only at very high concentrations (15 mg/kg). Has neither coagulant nor anticoagulant activity. PLA2 catalyzes the calcium-dependent hydrolysis of the 2-acyl groups in 3-sn-phosphoglycerides. In Bothrops ammodytoides (Yararanata), this protein is Acidic phospholipase A2.